A 571-amino-acid polypeptide reads, in one-letter code: Urease subunit alpha (571 aa).

Residues His-138, His-140, and Lys-221 each coordinate Ni(2+). Lys-221 carries the N6-carboxylysine modification. His-223 is a substrate binding site. Residues His-250 and His-276 each contribute to the Ni(2+) site. The active-site Proton donor is His-324. Asp-364 contributes to the Ni(2+) binding site.

Belongs to the metallo-dependent hydrolases superfamily. Urease alpha subunit family. Heterotrimer of UreA (gamma), UreB (beta) and UreC (alpha) subunits. Three heterotrimers associate to form the active enzyme. Ni cation is required as a cofactor. Carboxylation allows a single lysine to coordinate two nickel ions.

Its subcellular location is the cytoplasm. It catalyses the reaction urea + 2 H2O + H(+) = hydrogencarbonate + 2 NH4(+). The protein operates within nitrogen metabolism; urea degradation; CO(2) and NH(3) from urea (urease route): step 1/1. The chain is Urease subunit alpha from Staphylococcus aureus (strain JH9).